We begin with the raw amino-acid sequence, 284 residues long: Tropomyosin-2 (284 aa).

Residues 1 to 284 (MDAIKKKMQA…DQTFAELTGY (284 aa)) are a coiled coil. The disordered stretch occupies residues 82–110 (ESEVATQNRKVQQIEEDLEKSEERSTTAQ).

The protein belongs to the tropomyosin family. In terms of assembly, homodimer.

In terms of biological role, tropomyosin, in association with the troponin complex, plays a central role in the calcium dependent regulation of muscle contraction. May also regulate motor systems required to maintain nuclear integrity and apico-basal polarity during embryogenesis. In Drosophila melanogaster (Fruit fly), this protein is Tropomyosin-2 (Tm2).